The chain runs to 186 residues: Peptidyl-tRNA hydrolase (186 aa).

Tyr14 provides a ligand contact to tRNA. His19 functions as the Proton acceptor in the catalytic mechanism. TRNA-binding residues include Tyr64, Asn66, and Asn112.

It belongs to the PTH family. As to quaternary structure, monomer.

Its subcellular location is the cytoplasm. The enzyme catalyses an N-acyl-L-alpha-aminoacyl-tRNA + H2O = an N-acyl-L-amino acid + a tRNA + H(+). Functionally, hydrolyzes ribosome-free peptidyl-tRNAs (with 1 or more amino acids incorporated), which drop off the ribosome during protein synthesis, or as a result of ribosome stalling. Catalyzes the release of premature peptidyl moieties from peptidyl-tRNA molecules trapped in stalled 50S ribosomal subunits, and thus maintains levels of free tRNAs and 50S ribosomes. This is Peptidyl-tRNA hydrolase from Mesoplasma florum (strain ATCC 33453 / NBRC 100688 / NCTC 11704 / L1) (Acholeplasma florum).